Here is a 607-residue protein sequence, read N- to C-terminus: Elongation factor 4 (607 aa).

The tr-type G domain occupies 11–193 (SKIRNFSIIA…QIVEKVPAPA (183 aa)). Residues 23–28 (DHGKST) and 140–143 (NKID) each bind GTP.

The protein belongs to the TRAFAC class translation factor GTPase superfamily. Classic translation factor GTPase family. LepA subfamily.

The protein localises to the cell membrane. The catalysed reaction is GTP + H2O = GDP + phosphate + H(+). In terms of biological role, required for accurate and efficient protein synthesis under certain stress conditions. May act as a fidelity factor of the translation reaction, by catalyzing a one-codon backward translocation of tRNAs on improperly translocated ribosomes. Back-translocation proceeds from a post-translocation (POST) complex to a pre-translocation (PRE) complex, thus giving elongation factor G a second chance to translocate the tRNAs correctly. Binds to ribosomes in a GTP-dependent manner. The chain is Elongation factor 4 from Bacillus cereus (strain ATCC 14579 / DSM 31 / CCUG 7414 / JCM 2152 / NBRC 15305 / NCIMB 9373 / NCTC 2599 / NRRL B-3711).